The following is an 851-amino-acid chain: Venom phosphodiesterase (851 aa).

The N-terminal stretch at 1–23 (MIQQKVLFISLVAVALGLGLGLG) is a signal peptide. 2 consecutive SMB domains span residues 30–73 (PQVS…VLPT) and 74–118 (QSWS…GETS). Intrachain disulfides connect cysteine 34–cysteine 38, cysteine 34–cysteine 51, cysteine 38–cysteine 69, cysteine 49–cysteine 51, cysteine 49–cysteine 62, cysteine 55–cysteine 61, cysteine 62–cysteine 69, cysteine 78–cysteine 83, cysteine 78–cysteine 95, cysteine 83–cysteine 113, cysteine 93–cysteine 95, cysteine 93–cysteine 106, cysteine 99–cysteine 105, cysteine 106–cysteine 113, cysteine 124–cysteine 170, and cysteine 132–cysteine 344. N-linked (GlcNAc...) asparagine glycosylation occurs at asparagine 39. Residues 58-60 (RQA) carry the Cell attachment site motif. The a divalent metal cation site is built by aspartate 147 and threonine 185. The active-site AMP-threonine intermediate is the threonine 185. 3 N-linked (GlcNAc...) asparagine glycosylation sites follow: asparagine 216, asparagine 259, and asparagine 270. An AMP-binding site is contributed by lysine 271. Aspartate 305, histidine 309, aspartate 352, and histidine 353 together coordinate a divalent metal cation. Histidine 309 lines the AMP pocket. Intrachain disulfides connect cysteine 360–cysteine 457, cysteine 408–cysteine 793, cysteine 541–cysteine 599, cysteine 554–cysteine 654, cysteine 556–cysteine 639, and cysteine 762–cysteine 772. A glycan (N-linked (GlcNAc...) asparagine) is linked at asparagine 405. Histidine 462 contacts a divalent metal cation. 3 N-linked (GlcNAc...) asparagine glycosylation sites follow: asparagine 512, asparagine 594, and asparagine 745.

Belongs to the nucleotide pyrophosphatase/phosphodiesterase family. In terms of assembly, monomer cleaved in two subunits; disulfide-linked. Is synthesized as a single-chain protein and is subsequently cleaved to form a two-subunit protein held together with disulfide bonds. A divalent metal cation is required as a cofactor. In terms of tissue distribution, expressed by venom gland.

The protein localises to the secreted. The enzyme catalyses ADP + H2O = AMP + phosphate + H(+). Its function is as follows. Hydrolyzes ADP with high activity. Shows weak or no activity on 5'-AMP, 5'-GMP, 3'-AMP, ATP, cAMP, and cGMP. Is devoid of monophosphatase and proteinase activities. Dose-dependently inhibits platelet aggregation induced by ADP (IC(50)=0.99 uM) and collagen (IC(50)=1.4 uM). This Macrovipera lebetinus (Levantine viper) protein is Venom phosphodiesterase.